Here is a 445-residue protein sequence, read N- to C-terminus: GTPase Der (445 aa).

EngA-type G domains are found at residues 3–167 (PVIA…YAGQ) and 180–353 (IKIA…AAAM). GTP-binding positions include 9–16 (GRPNVGKS), 56–60 (DTGGF), 119–122 (NKAE), 186–193 (GRPNVGKS), 233–237 (DTAGL), and 298–301 (NKWD). Positions 354–438 (SKLPTPKLTR…PLRIEFRSSN (85 aa)) constitute a KH-like domain.

The protein belongs to the TRAFAC class TrmE-Era-EngA-EngB-Septin-like GTPase superfamily. EngA (Der) GTPase family. As to quaternary structure, associates with the 50S ribosomal subunit.

GTPase that plays an essential role in the late steps of ribosome biogenesis. The chain is GTPase Der from Burkholderia cenocepacia (strain ATCC BAA-245 / DSM 16553 / LMG 16656 / NCTC 13227 / J2315 / CF5610) (Burkholderia cepacia (strain J2315)).